A 309-amino-acid chain; its full sequence is MKNEMNYYEISREEWRYFHGRGEKYTAITDDELQQVSGLNDRISLTDVSDIYVPLRHLLQMKYEQFRENQIKQSEFLEIKPHKTPFIIGIAGSVAVGKSTTARLLQLLLSRVYPDKTVQMITTDGFLYSTSELKQKGILDKKGFPESYDMPQLISFLNAVKNNVAPVKAPKYSHQIYDIIPDEFDIIDDPDILIVEGINVLQLPTTEQIYVSDFFDFSVYVDANPSLIEKWFLERFDLLLDLAKDDPTNYYYPYAISDRASAFKMARRVWRDIDLRNLNDYILPTRNRADLILHKTKHHLIDKVFLRKY.

Position 92-99 (92-99 (GSVAVGKS)) interacts with ATP.

It belongs to the prokaryotic pantothenate kinase family.

Its subcellular location is the cytoplasm. The catalysed reaction is (R)-pantothenate + ATP = (R)-4'-phosphopantothenate + ADP + H(+). Its pathway is cofactor biosynthesis; coenzyme A biosynthesis; CoA from (R)-pantothenate: step 1/5. The chain is Pantothenate kinase from Latilactobacillus sakei subsp. sakei (strain 23K) (Lactobacillus sakei subsp. sakei).